A 226-amino-acid polypeptide reads, in one-letter code: MDLEALKKEAALRSVALVQSGQRVGLGTGSTAKYAIEELGRKLAAGELSGIVGVSTSEASEKLAREVGIPTEPLDPRPLDIAIDGADEIAPNLDLVKGLGGALVREKMTEVQAKRLIIIADHTKLVTRLGEKAPLPIEIVPFGFLSTIERLREFLPGGRLRQPGAQPYVTDNGNYIFDAQLPAEFDARELERRIKGTLGVVDTGLFLGMAERAFVAAPDGVQELTR.

Substrate-binding positions include 28-31 (TGST), 84-87 (DGAD), and 97-100 (KGLG). Residue E106 is the Proton acceptor of the active site. Residue K124 participates in substrate binding.

The protein belongs to the ribose 5-phosphate isomerase family. Homodimer.

The catalysed reaction is aldehydo-D-ribose 5-phosphate = D-ribulose 5-phosphate. It functions in the pathway carbohydrate degradation; pentose phosphate pathway; D-ribose 5-phosphate from D-ribulose 5-phosphate (non-oxidative stage): step 1/1. Functionally, catalyzes the reversible conversion of ribose-5-phosphate to ribulose 5-phosphate. This Deinococcus radiodurans (strain ATCC 13939 / DSM 20539 / JCM 16871 / CCUG 27074 / LMG 4051 / NBRC 15346 / NCIMB 9279 / VKM B-1422 / R1) protein is Ribose-5-phosphate isomerase A.